Consider the following 344-residue polypeptide: MVKVGIFGATGYTGVELIRILSKHEKVEIKYLSSQSYNTKAISDVYSSLIGFCDKVLEEVDFQKAMSECDVIFTALPSGHASKIAREAVKKGVKVIDLGADFRFDDYSVYKEWYSGDYEDYGDIKRVYGIPEIYRDDIKEAQVVGNPGCYPTSVILGLMPLLKNGIIEGNIIVDSKSGVSGAGHNPSYNNMYAECNENIKAYNVAKHRHIPEMEQELSKIFGEKVSVVFTPHLAPMTRGILSTMYCKLKKDMDVNTVYNIYTDFYKNEYFVKVLKPGNYPATKNVYGSNFCHIGFEVDKHTNTLIVMSAIDNLVKGASGQAVQNMNIMFGIEENTALDIVPIYP.

Cys-149 is an active-site residue.

The protein belongs to the NAGSA dehydrogenase family. Type 1 subfamily.

The protein resides in the cytoplasm. The catalysed reaction is N-acetyl-L-glutamate 5-semialdehyde + phosphate + NADP(+) = N-acetyl-L-glutamyl 5-phosphate + NADPH + H(+). It functions in the pathway amino-acid biosynthesis; L-arginine biosynthesis; N(2)-acetyl-L-ornithine from L-glutamate: step 3/4. In terms of biological role, catalyzes the NADPH-dependent reduction of N-acetyl-5-glutamyl phosphate to yield N-acetyl-L-glutamate 5-semialdehyde. The sequence is that of N-acetyl-gamma-glutamyl-phosphate reductase from Thermoanaerobacter pseudethanolicus (strain ATCC 33223 / 39E) (Clostridium thermohydrosulfuricum).